The chain runs to 212 residues: MYLKRTLITLSLITLPIVPFLSYAAESINNTSSTENLAPVTVDSSDPVSDKQGESWWQRSKNNLSTTWNAPQSHDIYIPAITWHNRWTYDKEKTDRYNERPWGAGYGVSRLDKDGDWHGLYIMAFKDSFNKWEPIGGYGYEKRWRPTSDQDFQLGLGFTAGVTMRDNWNYIPIPVLLPLASISYSKLSFQATYIPGTYNNGNVFFAWLRWQI.

Residues Met1–Ala24 form the signal peptide. Over residues Asn36–Pro47 the composition is skewed to polar residues. Residues Asn36 to Trp56 form a disordered region. Catalysis depends on residues His84, Asp127, and Ser128.

The protein belongs to the lipid A palmitoyltransferase family. As to quaternary structure, homodimer.

It localises to the cell outer membrane. It catalyses the reaction a lipid A + a 1,2-diacyl-sn-glycero-3-phosphocholine = a hepta-acyl lipid A + a 2-acyl-sn-glycero-3-phosphocholine. The catalysed reaction is a lipid IVA + a 1,2-diacyl-sn-glycero-3-phosphocholine = a lipid IVB + a 2-acyl-sn-glycero-3-phosphocholine. It carries out the reaction a lipid IIA + a 1,2-diacyl-sn-glycero-3-phosphocholine = a lipid IIB + a 2-acyl-sn-glycero-3-phosphocholine. Transfers a fatty acid residue from the sn-1 position of a phospholipid to the N-linked hydroxyfatty acid chain on the proximal unit of lipid A or its precursors. This Pectobacterium carotovorum subsp. carotovorum (strain PC1) protein is Lipid A acyltransferase PagP.